The chain runs to 347 residues: NADH-ubiquinone oxidoreductase chain 2 (347 aa).

10 helical membrane passes run 1 to 21 (MNPL…AIVA), 25 to 45 (HWLM…PILM), 59 to 79 (YFLT…MNLV), 111 to 131 (FHFW…LILL), 149 to 169 (INLD…GWGG), 178 to 198 (IMAY…TYNP), 201 to 221 (TLLN…MFML), 237 to 257 (MPLL…LPPL), 274 to 294 (NSVI…YFYM), and 326 to 346 (LSPL…LALL).

This sequence belongs to the complex I subunit 2 family. As to quaternary structure, core subunit of respiratory chain NADH dehydrogenase (Complex I) which is composed of 45 different subunits. Interacts with TMEM242.

The protein localises to the mitochondrion inner membrane. It catalyses the reaction a ubiquinone + NADH + 5 H(+)(in) = a ubiquinol + NAD(+) + 4 H(+)(out). Functionally, core subunit of the mitochondrial membrane respiratory chain NADH dehydrogenase (Complex I) which catalyzes electron transfer from NADH through the respiratory chain, using ubiquinone as an electron acceptor. Essential for the catalytic activity and assembly of complex I. The sequence is that of NADH-ubiquinone oxidoreductase chain 2 from Pteropus rodricensis (Rodriguez flying fox).